Here is a 350-residue protein sequence, read N- to C-terminus: D-guloside 3-dehydrogenase (350 aa).

This sequence belongs to the zinc-containing alcohol dehydrogenase family. Zn(2+) is required as a cofactor.

It carries out the reaction a D-guloside + NAD(+) = a 3-dehydro-D-guloside + NADH + H(+). Functionally, catalyzes the NAD(+)-dependent oxidation of the hydroxyl group at C3 of D-gulosides leading to 3-dehydro-D-gulosides. Probably functions in a metabolic pathway that transforms D-gulosides to D-glucosides. Is also able to catalyze the reverse reactions, i.e. the NADH-dependent reduction of the oxo group at C3 of 3-dehydro-D-gulosides leading to D-gulosides. In vitro, can oxidize D-gulose and methyl beta-D-guloside, and reduce methyl alpha-3-dehydro-D-guloside and methyl beta-3-dehydro-D-guloside. However, the actual specific physiological substrates for this metabolic pathway are unknown. In Escherichia coli (strain K12), this protein is D-guloside 3-dehydrogenase (ycjQ).